A 129-amino-acid polypeptide reads, in one-letter code: MAKDATRIRRRERKNIASGIAHVNSSFNNTTITITDAQGNAIAWSSAGTMGFKGSRKSTPYAAQVAAEDVAKKAQEHGMRTLEVEVAGPGSGRESALRALQAAGFTVTSIRDVTTIPHNGCRPRKRRRV.

Part of the 30S ribosomal subunit. Interacts with proteins S7 and S18. Binds to IF-3. In terms of processing, may be methylated on an undetermined residue.

In terms of biological role, located on the platform of the 30S subunit, it bridges several disparate RNA helices of the 16S rRNA. Forms part of the Shine-Dalgarno cleft in the 70S ribosome. The protein is Small ribosomal subunit protein uS11 of Rhodopseudomonas palustris (strain ATCC BAA-98 / CGA009).